The following is a 250-amino-acid chain: Geranylgeranylglyceryl phosphate synthase (250 aa).

Mg(2+)-binding residues include D26 and S55. Residues 174–180, 205–206, and 227–228 contribute to the sn-glycerol 1-phosphate site; these read YLEAGSG, GG, and GT.

The protein belongs to the GGGP/HepGP synthase family. Group II subfamily. The cofactor is Mg(2+).

The protein localises to the cytoplasm. It catalyses the reaction sn-glycerol 1-phosphate + (2E,6E,10E)-geranylgeranyl diphosphate = sn-3-O-(geranylgeranyl)glycerol 1-phosphate + diphosphate. It participates in membrane lipid metabolism; glycerophospholipid metabolism. Functionally, prenyltransferase that catalyzes the transfer of the geranylgeranyl moiety of geranylgeranyl diphosphate (GGPP) to the C3 hydroxyl of sn-glycerol-1-phosphate (G1P). This reaction is the first ether-bond-formation step in the biosynthesis of archaeal membrane lipids. This Nitrosopumilus maritimus (strain SCM1) protein is Geranylgeranylglyceryl phosphate synthase.